The following is a 441-amino-acid chain: Probable carboxypeptidase NFIA_052450 (441 aa).

The N-terminal stretch at 1 to 16 (MKPLSSLLLSAALSAA) is a signal peptide. 2 N-linked (GlcNAc...) asparagine glycosylation sites follow: asparagine 88 and asparagine 150. Zn(2+) is bound at residue aspartate 166. Glutamate 198 functions as the Proton acceptor in the catalytic mechanism. Glutamate 199 provides a ligand contact to Zn(2+). N-linked (GlcNAc...) asparagine glycosylation is found at asparagine 354 and asparagine 373.

This sequence belongs to the peptidase M20A family. Zn(2+) is required as a cofactor.

Its subcellular location is the secreted. In Neosartorya fischeri (strain ATCC 1020 / DSM 3700 / CBS 544.65 / FGSC A1164 / JCM 1740 / NRRL 181 / WB 181) (Aspergillus fischerianus), this protein is Probable carboxypeptidase NFIA_052450.